Here is a 502-residue protein sequence, read N- to C-terminus: Putative diacyglycerol O-acyltransferase MT1809 (502 aa).

The Proton acceptor role is filled by H174.

It belongs to the long-chain O-acyltransferase family.

The catalysed reaction is an acyl-CoA + a 1,2-diacyl-sn-glycerol = a triacyl-sn-glycerol + CoA. It functions in the pathway glycerolipid metabolism; triacylglycerol biosynthesis. This chain is Putative diacyglycerol O-acyltransferase MT1809, found in Mycobacterium tuberculosis (strain CDC 1551 / Oshkosh).